A 196-amino-acid chain; its full sequence is Large ribosomal subunit protein eL15 (196 aa).

The segment at Arg-159–Lys-196 is disordered. Residues Lys-179–Lys-196 are compositionally biased toward basic and acidic residues.

Belongs to the eukaryotic ribosomal protein eL15 family.

The protein is Large ribosomal subunit protein eL15 of Natronomonas pharaonis (strain ATCC 35678 / DSM 2160 / CIP 103997 / JCM 8858 / NBRC 14720 / NCIMB 2260 / Gabara) (Halobacterium pharaonis).